The following is a 171-amino-acid chain: Tetratricopeptide repeat protein 9C (171 aa).

TPR repeat units lie at residues Ala-8–Leu-41, Thr-72–Asn-107, and Ala-108–Asp-141.

It belongs to the TTC9 family.

This chain is Tetratricopeptide repeat protein 9C (Ttc9c), found in Mus musculus (Mouse).